A 145-amino-acid chain; its full sequence is Transmembrane protein CCDC163 (145 aa).

Residues 38–54 form a helical membrane-spanning segment; the sequence is LIGLCICFFCSSGCIFL.

It is found in the membrane. The polypeptide is Transmembrane protein CCDC163 (Homo sapiens (Human)).